Reading from the N-terminus, the 545-residue chain is Glucose-6-phosphate isomerase (545 aa).

The active-site Proton donor is the Glu351. Catalysis depends on residues His382 and Lys510.

The protein belongs to the GPI family.

It is found in the cytoplasm. It catalyses the reaction alpha-D-glucose 6-phosphate = beta-D-fructose 6-phosphate. It functions in the pathway carbohydrate biosynthesis; gluconeogenesis. The protein operates within carbohydrate degradation; glycolysis; D-glyceraldehyde 3-phosphate and glycerone phosphate from D-glucose: step 2/4. Its function is as follows. Catalyzes the reversible isomerization of glucose-6-phosphate to fructose-6-phosphate. The chain is Glucose-6-phosphate isomerase from Shewanella sediminis (strain HAW-EB3).